Consider the following 337-residue polypeptide: Glutaminase-asparaginase (337 aa).

Residues 10-337 form the Asparaginase/glutaminase domain; that stretch reads ANVVILATGG…KELQRIFWEY (328 aa). The active-site Acyl-ester intermediate is the threonine 20. Residues serine 67 and 100–101 each bind substrate; that span reads TD.

It belongs to the asparaginase 1 family. In terms of assembly, homotetramer.

It is found in the periplasm. The catalysed reaction is L-glutamine + H2O = L-glutamate + NH4(+). It carries out the reaction L-asparagine + H2O = L-aspartate + NH4(+). The polypeptide is Glutaminase-asparaginase (ansB) (Pseudomonas sp. (strain ATCC 29598 / 7A)).